Consider the following 136-residue polypeptide: Protein PsiE (136 aa).

4 helical membrane-spanning segments follow: residues 15–35, 55–75, 83–103, and 108–128; these read ILQN…VVFL, YELV…ALIV, HFPL…LIIV, and PMDV…LWLC.

The protein belongs to the PsiE family.

The protein resides in the cell inner membrane. In Salmonella gallinarum (strain 287/91 / NCTC 13346), this protein is Protein PsiE.